The sequence spans 355 residues: MSIQTKQNINVLSANMHNASIQTAIEQLISNQSLSYTQSKALFDEIMQGNMSDIELSALLIALKSKGEISDEIAGAAASMRENALAFNTTRNQLADCCGTGGDGSNTINISTTAAIVAAAAGINMVKHGNRSVSSNSGSADLLKALGINIEMTPAQAANCLEQTGFTFLFAPQYHPGVRHAMGVRTALKTRTIFNILGPLVNPAAPEVQLLGVYNPNLCLPMAQTLRTLGTKRAMIVHGSGTDEIALHGPTTVVELNNGNISEYTLNPSDFDLANYSLEQLTGEGPQYNANVSLAILQGKGDEAHNAAIIVNVAALLYLSGKAQSLKDGAHKVHTLLSSGQAMNTLNAIIEVSNG.

5-phospho-alpha-D-ribose 1-diphosphate is bound by residues Gly-99, 102-103, Thr-107, 109-112, 127-135, and Ser-139; these read GD, NIST, and KHGNRSVSS. Residue Gly-99 coordinates anthranilate. Mg(2+) is bound at residue Ser-111. Asn-130 lines the anthranilate pocket. Arg-185 serves as a coordination point for anthranilate. Residues Asp-243 and Glu-244 each contribute to the Mg(2+) site.

The protein belongs to the anthranilate phosphoribosyltransferase family. Homodimer. Requires Mg(2+) as cofactor.

It carries out the reaction N-(5-phospho-beta-D-ribosyl)anthranilate + diphosphate = 5-phospho-alpha-D-ribose 1-diphosphate + anthranilate. Its pathway is amino-acid biosynthesis; L-tryptophan biosynthesis; L-tryptophan from chorismate: step 2/5. Functionally, catalyzes the transfer of the phosphoribosyl group of 5-phosphorylribose-1-pyrophosphate (PRPP) to anthranilate to yield N-(5'-phosphoribosyl)-anthranilate (PRA). This is Anthranilate phosphoribosyltransferase from Pseudoalteromonas translucida (strain TAC 125).